An 892-amino-acid chain; its full sequence is Alpha-actinin-1 (892 aa).

Residue M1 is modified to N-acetylmethionine. An actin-binding region spans residues 1-247 (MDHYDSQQTN…IMTYVSSFYH (247 aa)). Phosphoserine is present on S6. At Y12 the chain carries Phosphotyrosine; by FAK1. 2 Calponin-homology (CH) domains span residues 31–135 (KQQR…LRFA) and 144–250 (TSAK…HAFS). 2 positions are modified to N6-acetyllysine: K95 and K195. Spectrin repeat units follow at residues 274 to 384 (QLME…WLLN), 394 to 499 (HLAE…ALER), 509 to 620 (QLYL…ALTE), and 630 to 733 (RLRK…EVEN). The interaction with DDN stretch occupies residues 274–733 (QLMEDYEKLA…IARTINEVEN (460 aa)). A Phosphoserine modification is found at S471. K676 carries the post-translational modification N6-acetyllysine. S677 is modified (phosphoserine). EF-hand domains follow at residues 746–781 (EQMN…LGYD) and 787–822 (QGEA…ETAD). Residues D759, D761, S763, T765, and E770 each coordinate Ca(2+). S890 is modified (phosphoserine).

It belongs to the alpha-actinin family. As to quaternary structure, homodimer; antiparallel. Interacts with MYOZ2, TTID and LPP. Interacts with DDN. Interacts with PSD. Interacts with MICALL2. Interacts with DNM2 and CTTN. Interacts with PDLIM1. Interacts with PDLIM2. Interacts with PDLIM4 (via PDZ domain). Interacts with IGSF8.

The protein localises to the cytoplasm. Its subcellular location is the cytoskeleton. It is found in the myofibril. It localises to the sarcomere. The protein resides in the z line. The protein localises to the cell membrane. Its subcellular location is the cell junction. It is found in the cell projection. It localises to the ruffle. In terms of biological role, F-actin cross-linking protein which is thought to anchor actin to a variety of intracellular structures. Association with IGSF8 regulates the immune synapse formation and is required for efficient T-cell activation. The protein is Alpha-actinin-1 (Actn1) of Mus musculus (Mouse).